Reading from the N-terminus, the 210-residue chain is Uracil phosphoribosyltransferase (210 aa).

Residues Arg-78, Arg-103, and 130 to 138 contribute to the 5-phospho-alpha-D-ribose 1-diphosphate site; that span reads DPMLATGGT. Residues Ile-193 and 198–200 each bind uracil; that span reads GDA. Residue Asp-199 participates in 5-phospho-alpha-D-ribose 1-diphosphate binding.

This sequence belongs to the UPRTase family. Mg(2+) is required as a cofactor.

It catalyses the reaction UMP + diphosphate = 5-phospho-alpha-D-ribose 1-diphosphate + uracil. The protein operates within pyrimidine metabolism; UMP biosynthesis via salvage pathway; UMP from uracil: step 1/1. Allosterically activated by GTP. Its function is as follows. Catalyzes the conversion of uracil and 5-phospho-alpha-D-ribose 1-diphosphate (PRPP) to UMP and diphosphate. The polypeptide is Uracil phosphoribosyltransferase (Xanthomonas axonopodis pv. citri (strain 306)).